We begin with the raw amino-acid sequence, 321 residues long: tRNA-dihydrouridine synthase B (321 aa).

FMN-binding positions include 16–18 (PMA) and Gln-70. Cys-100 (proton donor) is an active-site residue. FMN is bound by residues Lys-139, 200 to 202 (NGD), and 224 to 225 (GR).

The protein belongs to the Dus family. DusB subfamily. FMN is required as a cofactor.

The enzyme catalyses a 5,6-dihydrouridine in tRNA + NAD(+) = a uridine in tRNA + NADH + H(+). It catalyses the reaction a 5,6-dihydrouridine in tRNA + NADP(+) = a uridine in tRNA + NADPH + H(+). In terms of biological role, catalyzes the synthesis of 5,6-dihydrouridine (D), a modified base found in the D-loop of most tRNAs, via the reduction of the C5-C6 double bond in target uridines. In Shigella flexneri, this protein is tRNA-dihydrouridine synthase B.